The sequence spans 858 residues: DNA mismatch repair protein MutS (858 aa).

602–609 serves as a coordination point for ATP; sequence GPNMSGKS.

Belongs to the DNA mismatch repair MutS family.

Functionally, this protein is involved in the repair of mismatches in DNA. It is possible that it carries out the mismatch recognition step. This protein has a weak ATPase activity. Overexpression of mutSL partially suppresses the high spontaneous mutation frequency of a ytkD/mutM/mutY triple disruption which lacks the system required to prevent damage by oxidized guanine (8-oxo-dGTP). This suggests that MutSL also functions to repair mismatches due to oxidative stress in both growing and stationary phase cells. In Bacillus subtilis (strain 168), this protein is DNA mismatch repair protein MutS.